We begin with the raw amino-acid sequence, 151 residues long: Transcriptional regulator MraZ (151 aa).

SpoVT-AbrB domains follow at residues 5–52 (IHQV…PLSE) and 81–124 (ATDL…SQEE).

It belongs to the MraZ family. Forms oligomers.

It is found in the cytoplasm. It localises to the nucleoid. This Marinomonas sp. (strain MWYL1) protein is Transcriptional regulator MraZ.